Here is a 341-residue protein sequence, read N- to C-terminus: Holliday junction branch migration complex subunit RuvB (341 aa).

The interval 1-182 is large ATPase domain (RuvB-L); sequence MTERFVTPDF…FGVICRLEFY (182 aa). ATP-binding positions include leucine 21, arginine 22, glycine 63, lysine 66, threonine 67, threonine 68, 129–131, arginine 172, tyrosine 182, and arginine 219; that span reads EDY. Position 67 (threonine 67) interacts with Mg(2+). The interval 183-253 is small ATPAse domain (RuvB-S); sequence TDDELATIAG…IADMALSRLE (71 aa). Residues 256 to 341 are head domain (RuvB-H); sequence NCGLDHMDRL…RGKTSGELFS (86 aa). Residues arginine 311 and arginine 316 each contribute to the DNA site.

Belongs to the RuvB family. Homohexamer. Forms an RuvA(8)-RuvB(12)-Holliday junction (HJ) complex. HJ DNA is sandwiched between 2 RuvA tetramers; dsDNA enters through RuvA and exits via RuvB. An RuvB hexamer assembles on each DNA strand where it exits the tetramer. Each RuvB hexamer is contacted by two RuvA subunits (via domain III) on 2 adjacent RuvB subunits; this complex drives branch migration. In the full resolvosome a probable DNA-RuvA(4)-RuvB(12)-RuvC(2) complex forms which resolves the HJ.

It is found in the cytoplasm. It catalyses the reaction ATP + H2O = ADP + phosphate + H(+). Functionally, the RuvA-RuvB-RuvC complex processes Holliday junction (HJ) DNA during genetic recombination and DNA repair, while the RuvA-RuvB complex plays an important role in the rescue of blocked DNA replication forks via replication fork reversal (RFR). RuvA specifically binds to HJ cruciform DNA, conferring on it an open structure. The RuvB hexamer acts as an ATP-dependent pump, pulling dsDNA into and through the RuvAB complex. RuvB forms 2 homohexamers on either side of HJ DNA bound by 1 or 2 RuvA tetramers; 4 subunits per hexamer contact DNA at a time. Coordinated motions by a converter formed by DNA-disengaged RuvB subunits stimulates ATP hydrolysis and nucleotide exchange. Immobilization of the converter enables RuvB to convert the ATP-contained energy into a lever motion, pulling 2 nucleotides of DNA out of the RuvA tetramer per ATP hydrolyzed, thus driving DNA branch migration. The RuvB motors rotate together with the DNA substrate, which together with the progressing nucleotide cycle form the mechanistic basis for DNA recombination by continuous HJ branch migration. Branch migration allows RuvC to scan DNA until it finds its consensus sequence, where it cleaves and resolves cruciform DNA. This is Holliday junction branch migration complex subunit RuvB from Syntrophotalea carbinolica (strain DSM 2380 / NBRC 103641 / GraBd1) (Pelobacter carbinolicus).